A 221-amino-acid chain; its full sequence is Histone H1C (221 aa).

Composition is skewed to low complexity over residues 1-11 and 27-44; these read MTETAATETTP and KKAA…PSAS. Disordered regions lie at residues 1–44 and 123–221; these read MTET…PSAS and AKKK…AAKK. Residues 39 to 112 enclose the H15 domain; that stretch reads SGPSASELIV…GASGSFKLNK (74 aa). 2 stretches are compositionally biased toward basic residues: residues 123–150 and 158–221; these read AKKK…KPKK and SPKK…AAKK.

The protein belongs to the histone H1/H5 family.

Its subcellular location is the nucleus. The protein resides in the chromosome. In terms of biological role, histones H1 are necessary for the condensation of nucleosome chains into higher-order structures. In Xenopus laevis (African clawed frog), this protein is Histone H1C.